The sequence spans 353 residues: Ribosome biogenesis protein BRX1 homolog (353 aa).

Basic residues predominate over residues Met-1–Gly-10. The segment at Met-1 to Arg-46 is disordered. Residues Glu-60–Gly-249 form the Brix domain. Lys-160 is covalently cross-linked (Glycyl lysine isopeptide (Lys-Gly) (interchain with G-Cter in SUMO2)). The residue at position 261 (Ser-261) is a Phosphoserine. Lys-276 is subject to N6-acetyllysine. Glycyl lysine isopeptide (Lys-Gly) (interchain with G-Cter in SUMO2) cross-links involve residues Lys-314 and Lys-322.

Belongs to the BRX1 family.

The protein localises to the nucleus. It localises to the nucleolus. Its function is as follows. Required for biogenesis of the 60S ribosomal subunit. This is Ribosome biogenesis protein BRX1 homolog (BRIX1) from Bos taurus (Bovine).